A 308-amino-acid chain; its full sequence is Protein translocase subunit SecF (308 aa).

Transmembrane regions (helical) follow at residues 23–42 (VSYSFSIILSLISLIWIGIY), 140–160 (IEAGAMAMLFSFLAIMVYIGV), 164–184 (WYFGFGILIALVHDVILALGF), 194–214 (LSTIAAVLTIIGYSVNDSVVI), 246–266 (ILTVITTLLANLALILFGGKA), and 272–292 (VLVFFGIIAGTYSSIFISAPI).

This sequence belongs to the SecD/SecF family. SecF subfamily. As to quaternary structure, forms a complex with SecD. Part of the essential Sec protein translocation apparatus which comprises SecA, SecYEG and auxiliary proteins SecDF-YajC and YidC.

It is found in the cell inner membrane. Part of the Sec protein translocase complex. Interacts with the SecYEG preprotein conducting channel. SecDF uses the proton motive force (PMF) to complete protein translocation after the ATP-dependent function of SecA. This chain is Protein translocase subunit SecF, found in Rickettsia typhi (strain ATCC VR-144 / Wilmington).